The sequence spans 423 residues: N-acylneuraminate cytidylyltransferase B (423 aa).

Substrate contacts are provided by arginine 30, asparagine 40, arginine 88, serine 97, serine 99, and glutamine 120. Arginine 178 is an active-site residue.

Belongs to the CMP-NeuNAc synthase family. Homotetramer.

The protein resides in the cytoplasm. The catalysed reaction is an N-acylneuraminate + CTP = a CMP-N-acyl-beta-neuraminate + diphosphate. It participates in amino-sugar metabolism; N-acetylneuraminate metabolism. In terms of biological role, catalyzes the activation of 2-keto-3-deoxy-D-glycero-D-galacto-nononic acid (KDN) to cytidine 5'-monophosphate 2-keto-3-deoxy-D-glycero-D-galacto-nononic acid (CMP-KDN), a substrate required for the addition of sialic acid. Also has weak activity towards N-acetylneuraminic acid (NeuNAc) and N-glycolylneuraminic acid (Neu5Gc). The chain is N-acylneuraminate cytidylyltransferase B from Danio rerio (Zebrafish).